The following is a 94-amino-acid chain: Putative pterin-4-alpha-carbinolamine dehydratase (94 aa).

The protein belongs to the pterin-4-alpha-carbinolamine dehydratase family.

It catalyses the reaction (4aS,6R)-4a-hydroxy-L-erythro-5,6,7,8-tetrahydrobiopterin = (6R)-L-erythro-6,7-dihydrobiopterin + H2O. The chain is Putative pterin-4-alpha-carbinolamine dehydratase from Mycobacterium avium (strain 104).